Consider the following 259-residue polypeptide: Phosphate import ATP-binding protein PstB 1 (259 aa).

The region spanning 7 to 254 (VKPEDVYQIN…PDDHRTKDYI (248 aa)) is the ABC transporter domain. 45–52 (GPSGCGKS) is a binding site for ATP.

It belongs to the ABC transporter superfamily. Phosphate importer (TC 3.A.1.7) family. In terms of assembly, the complex is composed of two ATP-binding proteins (PstB), two transmembrane proteins (PstC and PstA) and a solute-binding protein (PstS).

The protein localises to the cell membrane. It carries out the reaction phosphate(out) + ATP + H2O = ADP + 2 phosphate(in) + H(+). Its function is as follows. Part of the ABC transporter complex PstSACB involved in phosphate import. Responsible for energy coupling to the transport system. The chain is Phosphate import ATP-binding protein PstB 1 from Bacillus licheniformis (strain ATCC 14580 / DSM 13 / JCM 2505 / CCUG 7422 / NBRC 12200 / NCIMB 9375 / NCTC 10341 / NRRL NRS-1264 / Gibson 46).